We begin with the raw amino-acid sequence, 691 residues long: Serotransferrin-2 (691 aa).

Residues 1–18 (MKLLLLSALLGCLATAYA) form the signal peptide. Transferrin-like domains are found at residues 25–329 (VKWC…SLKK) and 340–670 (IKWC…SLRK). The cysteines at positions 28 and 50 are disulfide-linked. Asp74 and Tyr104 together coordinate Fe(3+). 3 cysteine pairs are disulfide-bonded: Cys127-Cys207, Cys172-Cys186, and Cys235-Cys249. Residues Thr129, Ser134, Gly136, and Trp137 each coordinate hydrogencarbonate. The N-linked (GlcNAc...) asparagine glycan is linked to Asn169. Fe(3+) is bound at residue Tyr201. His257 provides a ligand contact to Fe(3+). Intrachain disulfides connect Cys343-Cys379 and Cys353-Cys370. Fe(3+)-binding residues include Asp394 and Tyr428. 7 cysteine pairs are disulfide-bonded: Cys404/Cys682, Cys419/Cys643, Cys451/Cys530, Cys475/Cys671, Cys485/Cys499, Cys496/Cys513, and Cys570/Cys584. Hydrogencarbonate-binding residues include Thr453, Arg457, Ala459, and Gly460. Tyr524 provides a ligand contact to Fe(3+). His592 contacts Fe(3+).

Belongs to the transferrin family. As to quaternary structure, monomer. In terms of tissue distribution, abundant in liver and serum with smaller amounts found in the stomach and kidney.

Its subcellular location is the secreted. Functionally, transferrins are iron binding transport proteins which can bind two Fe(3+) ions in association with the binding of an anion, usually bicarbonate. It is responsible for the transport of iron from sites of absorption and heme degradation to those of storage and utilization. Serum transferrin may also have a further role in stimulating cell proliferation. This Salmo salar (Atlantic salmon) protein is Serotransferrin-2 (tf2).